Here is a 585-residue protein sequence, read N- to C-terminus: YTH domain-containing family protein 3 (585 aa).

Disordered stretches follow at residues 1–51, 244–277, and 304–350; these read MSAT…SYPP, KPAK…MNIG, and PQPL…QPQL. Ser2 bears the N-acetylserine mark. Residues 15 to 24 are compositionally biased toward polar residues; the sequence is NKVSVQNGSI. A Phosphoserine modification is found at Ser23. A compositionally biased stretch (basic residues) spans 244–254; sequence KPAKPQPKLKP. Over residues 329–350 the composition is skewed to low complexity; it reads QQQQGPQPQAQPHQVQSQQPQL. A YTH domain is found at 416-550; that stretch reads GRVFIIKSYS…EKAKQVLKII (135 aa). RNA contacts are provided by residues 422–424, Asp428, 438–439, Asn468, Trp492, and Trp497; these read KSY and WC.

The protein belongs to the YTHDF family. YTHDF3 subfamily. Interacts with CNOT1; promoting recruitment of the CCR4-NOT complex. Interacts with YTHDF1. Interacts with YTHDF2. Interacts with PAN3.

It is found in the cytoplasm. Its subcellular location is the cytosol. The protein localises to the P-body. It localises to the stress granule. Functionally, specifically recognizes and binds N6-methyladenosine (m6A)-containing RNAs, and regulates their stability. M6A is a modification present at internal sites of mRNAs and some non-coding RNAs and plays a role in mRNA stability and processing. Acts as a regulator of mRNA stability by promoting degradation of m6A-containing mRNAs via interaction with the CCR4-NOT complex or PAN3. The YTHDF paralogs (YTHDF1, YTHDF2 and YTHDF3) share m6A-containing mRNAs targets and act redundantly to mediate mRNA degradation and cellular differentiation. Acts as a negative regulator of type I interferon response by down-regulating interferon-stimulated genes (ISGs) expression: acts by binding to FOXO3 mRNAs. Binds to FOXO3 mRNAs independently of METTL3-mediated m6A modification. Can also act as a regulator of mRNA stability in cooperation with YTHDF2 by binding to m6A-containing mRNA and promoting their degradation. Recognizes and binds m6A-containing circular RNAs (circRNAs); circRNAs are generated through back-splicing of pre-mRNAs, a non-canonical splicing process promoted by dsRNA structures across circularizing exons. Promotes formation of phase-separated membraneless compartments, such as P-bodies or stress granules, by undergoing liquid-liquid phase separation upon binding to mRNAs containing multiple m6A-modified residues: polymethylated mRNAs act as a multivalent scaffold for the binding of YTHDF proteins, juxtaposing their disordered regions and thereby leading to phase separation. The resulting mRNA-YTHDF complexes then partition into different endogenous phase-separated membraneless compartments, such as P-bodies, stress granules or neuronal RNA granules. May also recognize and bind N1-methyladenosine (m1A)-containing mRNAs: inhibits trophoblast invasion by binding to m1A-methylated transcripts of IGF1R, promoting their degradation. In Mus musculus (Mouse), this protein is YTH domain-containing family protein 3.